The following is a 528-amino-acid chain: 2-isopropylmalate synthase (528 aa).

The region spanning 12–279 is the Pyruvate carboxyltransferase domain; it reads IRIFDTTLRD…DSSINTPRIV (268 aa). Mn(2+)-binding residues include D21, H214, H216, and N250. The tract at residues 401 to 528 is regulatory domain; sequence RLASMTISDV…STDVPTPATA (128 aa).

Belongs to the alpha-IPM synthase/homocitrate synthase family. LeuA type 1 subfamily. Homodimer. Mn(2+) is required as a cofactor.

It is found in the cytoplasm. It catalyses the reaction 3-methyl-2-oxobutanoate + acetyl-CoA + H2O = (2S)-2-isopropylmalate + CoA + H(+). Its pathway is amino-acid biosynthesis; L-leucine biosynthesis; L-leucine from 3-methyl-2-oxobutanoate: step 1/4. Catalyzes the condensation of the acetyl group of acetyl-CoA with 3-methyl-2-oxobutanoate (2-ketoisovalerate) to form 3-carboxy-3-hydroxy-4-methylpentanoate (2-isopropylmalate). This is 2-isopropylmalate synthase from Stenotrophomonas maltophilia (strain K279a).